Reading from the N-terminus, the 296-residue chain is Probable ribosomal RNA small subunit methyltransferase A (296 aa).

The span at 1–16 shows a compositional bias: polar residues; sequence MTDATSGSDPDSTTPV. Residues 1–25 form a disordered region; the sequence is MTDATSGSDPDSTTPVDLTGEDFRD. The S-adenosyl-L-methionine site is built by His-44, Leu-46, Gly-72, Glu-93, Asp-121, and Asn-136.

It belongs to the class I-like SAM-binding methyltransferase superfamily. rRNA adenine N(6)-methyltransferase family. RsmA subfamily.

It is found in the cytoplasm. Its function is as follows. Specifically dimethylates two adjacent adenosines in the loop of a conserved hairpin near the 3'-end of 16S rRNA in the 30S particle. May play a critical role in biogenesis of 30S subunits. The chain is Probable ribosomal RNA small subunit methyltransferase A from Haloquadratum walsbyi (strain DSM 16790 / HBSQ001).